A 103-amino-acid polypeptide reads, in one-letter code: Integration host factor subunit beta (103 aa).

It belongs to the bacterial histone-like protein family. As to quaternary structure, heterodimer of an alpha and a beta chain.

This protein is one of the two subunits of integration host factor, a specific DNA-binding protein that functions in genetic recombination as well as in transcriptional and translational control. The polypeptide is Integration host factor subunit beta (Rhizobium meliloti (strain 1021) (Ensifer meliloti)).